Here is a 1202-residue protein sequence, read N- to C-terminus: Protein jagged-2 (1202 aa).

Topologically, residues G1 to T1037 are extracellular. A glycan (N-linked (GlcNAc...) asparagine) is linked at N107. The DSL domain occupies V150–C194. Disulfide bonds link C152-C161, C165-C177, C185-C194, C199-C210, C203-C216, C218-C227, C230-C241, C236-C247, C249-C258, C265-C277, C271-C287, C289-C298, C305-C316, C310-C325, C327-C336, C343-C354, C348-C363, C365-C374, C381-C392, C386-C401, C403-C412, C419-C429, C423-C438, C440-C449, C456-C467, C461-C476, C478-C487, C495-C506, C500-C515, C517-C526, C544-C567, C561-C577, C579-C588, C595-C606, C600-C615, C617-C626, C633-C644, C638-C653, C655-C664, C671-C682, C676-C691, and C693-C702. In terms of domain architecture, EGF-like 1 spans K195 to D228. Positions E229 to D259 constitute an EGF-like 2; atypical domain. EGF-like domains follow at residues D261 to E299 and A301 to A337. An EGF-like 5; calcium-binding domain is found at D339–Q375. The EGF-like 6; calcium-binding domain occupies D377–H413. Residues N415–E450 enclose the EGF-like 7; calcium-binding domain. EGF-like domains follow at residues E452–E488 and D490–S527. N525 carries N-linked (GlcNAc...) asparagine glycosylation. The EGF-like 10; atypical domain maps to P529–H589. N-linked (GlcNAc...) asparagine glycosylation is present at N574. One can recognise an EGF-like 11; calcium-binding domain in the interval N591–D627. Residues N629–H665 form the EGF-like 12; calcium-binding domain. EGF-like domains are found at residues R667 to T703 and K706 to T742. N707 is a glycosylation site (N-linked (GlcNAc...) asparagine). Cystine bridges form between C710-C721, C715-C730, C732-C741, C748-C759, C753-C768, C770-C779, C786-C797, C791-C806, and C808-C817. The EGF-like 15; calcium-binding domain occupies N744–R780. In terms of domain architecture, EGF-like 16; calcium-binding spans N782–Q818. A glycan (N-linked (GlcNAc...) asparagine) is linked at N1015. The chain crosses the membrane as a helical span at residues G1038–I1058. Residues C1059–E1202 lie on the Cytoplasmic side of the membrane. 3 stretches are compositionally biased toward basic and acidic residues: residues R1070–S1080, L1147–E1159, and V1185–E1202. A disordered region spans residues R1070–E1202. Position 1080 is a phosphoserine (S1080).

It localises to the membrane. In terms of biological role, putative Notch ligand involved in the mediation of Notch signaling. May have a role in neurogenesis in the peripheral nervous system, limb development and in the adult brain. The protein is Protein jagged-2 (Jag2) of Rattus norvegicus (Rat).